A 409-amino-acid polypeptide reads, in one-letter code: Isovaleryl-CoA dehydrogenase, mitochondrial (409 aa).

The N-terminal 22 residues, 1–22 (MAAAQRWLPGILRRGDGLARRL), are a transit peptide targeting the mitochondrion. FAD is bound by residues 151-160 (LAMSEPNSGS) and 184-186 (WCT). Ser-160 contributes to the substrate binding site. Residues 206–207 (SK), Tyr-261, and 268–271 (DLER) each bind substrate. Glu-270 serves as the catalytic Proton acceptor. FAD-binding positions include Arg-296, Gln-307, and 364 to 368 (QCLGG). Substrate is bound at residue 391–392 (AG). 393 to 395 (TSE) serves as a coordination point for FAD.

The protein belongs to the acyl-CoA dehydrogenase family. In terms of assembly, homodimer. It depends on FAD as a cofactor.

The protein resides in the mitochondrion. The enzyme catalyses 3-methylbutanoyl-CoA + oxidized [electron-transfer flavoprotein] + H(+) = 3-methylbut-2-enoyl-CoA + reduced [electron-transfer flavoprotein]. Its pathway is amino-acid degradation; L-leucine degradation; (S)-3-hydroxy-3-methylglutaryl-CoA from 3-isovaleryl-CoA: step 1/3. In Oryza sativa subsp. japonica (Rice), this protein is Isovaleryl-CoA dehydrogenase, mitochondrial.